Reading from the N-terminus, the 123-residue chain is F-box protein PP2-B3 (123 aa).

Residues 10-56 (PSPFDGLPENCISNIISFTTPRDACFAASVSKAFESAVQSDSVWEKF) enclose the F-box domain.

This Arabidopsis thaliana (Mouse-ear cress) protein is F-box protein PP2-B3 (PP2B3).